Here is a 114-residue protein sequence, read N- to C-terminus: Nascent polypeptide-associated complex protein (114 aa).

The NAC-A/B domain occupies 5 to 69; it reads PSQFKNLERM…AKEAQKEEPK (65 aa).

This sequence belongs to the NAC-alpha family. As to quaternary structure, homodimer. Interacts with the ribosome. Binds ribosomal RNA.

Contacts the emerging nascent chain on the ribosome. In Sulfurisphaera tokodaii (strain DSM 16993 / JCM 10545 / NBRC 100140 / 7) (Sulfolobus tokodaii), this protein is Nascent polypeptide-associated complex protein.